Here is a 409-residue protein sequence, read N- to C-terminus: Probable ferredoxin reductase CtmF (409 aa).

Residues alanine 15, aspartate 37, lysine 50, valine 83, aspartate 279, and valine 298 each contribute to the FAD site.

It belongs to the FAD-dependent oxidoreductase family. FAD serves as cofactor.

It functions in the pathway terpene metabolism; monoterpene degradation. Its function is as follows. Involved in the degradation of the cyclic monoterpene limonene. Probably part of an electron transfer system involved in the oxidation of limonene to perillyl alcohol. The chain is Probable ferredoxin reductase CtmF from Castellaniella defragrans (strain DSM 12143 / CCUG 39792 / 65Phen) (Alcaligenes defragrans).